The sequence spans 115 residues: Large ribosomal subunit protein bL20c (115 aa).

The protein belongs to the bacterial ribosomal protein bL20 family.

It is found in the plastid. The protein localises to the chloroplast. Binds directly to 23S ribosomal RNA and is necessary for the in vitro assembly process of the 50S ribosomal subunit. It is not involved in the protein synthesizing functions of that subunit. The protein is Large ribosomal subunit protein bL20c of Pleurastrum terricola (Filamentous green alga).